The chain runs to 102 residues: Small ribosomal subunit protein uS10 (102 aa).

The protein belongs to the universal ribosomal protein uS10 family. Part of the 30S ribosomal subunit.

In terms of biological role, involved in the binding of tRNA to the ribosomes. The sequence is that of Small ribosomal subunit protein uS10 from Paracoccus denitrificans (strain Pd 1222).